The sequence spans 81 residues: Conotoxin ArMKLT2-0311 (81 aa).

An N-terminal signal peptide occupies residues 1–22 (MKLTCVLIVALLFLTACQLTTA). Residues 23–34 (DDSRDKQEDPLV) are compositionally biased toward basic and acidic residues. Positions 23-45 (DDSRDKQEDPLVRSHRKMQKSED) are disordered. Positions 23-51 (DDSRDKQEDPLVRSHRKMQKSEDPKMAER) are excised as a propeptide. 3 cysteine pairs are disulfide-bonded: cysteine 52/cysteine 67, cysteine 59/cysteine 71, and cysteine 66/cysteine 80.

Belongs to the conotoxin O1 superfamily. Expressed by the venom duct.

Its subcellular location is the secreted. The sequence is that of Conotoxin ArMKLT2-0311 from Conus arenatus (Sand-dusted cone).